Consider the following 295-residue polypeptide: Protoheme IX farnesyltransferase 2 (295 aa).

Helical transmembrane passes span 9–29 (ITKPGIIFGNVLSVAGGFFLA), 36–56 (FALFLAVVIGTSLVVASGCVF), 83–103 (LPLALIYATLLGVAGFSLLYV), 108–128 (LSAFCALIGFIVYVGFYSLWL), 135–155 (GTLVGSLSGAMPPVIGYCAVS), 163–183 (VTLLVMFSLWQMPHSFAIAIF), 209–229 (IVLYVLAFVLATLMLTLGGYA), 230–250 (GLGYLAVAAAMGLYWLYMAWG), and 264–284 (VFGFSILTVTALSVMMGVDSQ).

It belongs to the UbiA prenyltransferase family. Protoheme IX farnesyltransferase subfamily.

Its subcellular location is the cell inner membrane. It catalyses the reaction heme b + (2E,6E)-farnesyl diphosphate + H2O = Fe(II)-heme o + diphosphate. It functions in the pathway porphyrin-containing compound metabolism; heme O biosynthesis; heme O from protoheme: step 1/1. Converts heme B (protoheme IX) to heme O by substitution of the vinyl group on carbon 2 of heme B porphyrin ring with a hydroxyethyl farnesyl side group. The polypeptide is Protoheme IX farnesyltransferase 2 (Pseudomonas putida (strain GB-1)).